A 300-amino-acid chain; its full sequence is Fluorinase (300 aa).

S-adenosyl-L-methionine-binding positions include D16, 21–23 (DDS), Y77, S158, D211, N216, 270–271 (SR), and 278–280 (RNA).

Belongs to the SAM hydrolase / SAM-dependent halogenase family. As to quaternary structure, homohexamer.

It carries out the reaction fluoride + S-adenosyl-L-methionine = 5'-deoxy-5'-fluoroadenosine + L-methionine. The catalysed reaction is chloride + S-adenosyl-L-methionine = 5'-chloro-5'-deoxyadenosine + L-methionine. Its activity is regulated as follows. Activity is severely inhibited by 1 mM Cu(2+) or Zn(2+). In terms of biological role, catalyzes the formation of a C-F bond by combining S-adenosyl-L-methionine (SAM) and fluoride to generate 5'-fluoro-5'-deoxyadenosine (5'-FDA) and L-methionine. Probably involved in fluoroacetate (FAc) and 4-fluorothreonine (4-FT) biosynthesis. In vitro, can also catalyze the conversion of chloride and SAM to 5'-chloro-5'-deoxyadenosine (5'-CIDA) and L-methionine in the presence of L-amino acid oxidase. This Nocardia brasiliensis (strain ATCC 700358 / HUJEG-1) protein is Fluorinase.